Here is a 3567-residue protein sequence, read N- to C-terminus: Sushi, von Willebrand factor type A, EGF and pentraxin domain-containing protein 1 (3567 aa).

A signal peptide spans 1-17 (MWSRLAFCCWALALVSG). In terms of domain architecture, VWFA spans 84-265 (ELVFLVDESS…LARRALHEDL (182 aa)). Asparagine 187 carries N-linked (GlcNAc...) asparagine glycosylation. Sushi domains lie at 377-436 (VHCP…FCRV), 437-496 (RTCP…RCVE), and 497-561 (RHCA…VCKD). 6 cysteine pairs are disulfide-bonded: cysteine 379–cysteine 421, cysteine 407–cysteine 434, cysteine 439–cysteine 481, cysteine 467–cysteine 494, cysteine 499–cysteine 544, and cysteine 530–cysteine 559. 2 consecutive HYR domains span residues 560–644 (KDVE…KVID) and 645–724 (VEPP…VIKG). The Sushi 4 domain occupies 725–789 (SPCEVPFTPV…YSTEWPDCAI (65 aa)). 20 disulfide bridges follow: cysteine 727–cysteine 769, cysteine 753–cysteine 787, cysteine 1196–cysteine 1207, cysteine 1201–cysteine 1216, cysteine 1218–cysteine 1227, cysteine 1234–cysteine 1245, cysteine 1239–cysteine 1254, cysteine 1256–cysteine 1265, cysteine 1272–cysteine 1283, cysteine 1277–cysteine 1292, cysteine 1294–cysteine 1303, cysteine 1310–cysteine 1321, cysteine 1315–cysteine 1330, cysteine 1332–cysteine 1341, cysteine 1348–cysteine 1359, cysteine 1353–cysteine 1368, cysteine 1370–cysteine 1379, cysteine 1386–cysteine 1397, cysteine 1391–cysteine 1406, and cysteine 1408–cysteine 1417. The EGF-like 1 domain occupies 1192–1228 (VFHECFLNPCHNSGTCQQLGRGYVCLCPPGYTGLKCE). In terms of domain architecture, EGF-like 2; calcium-binding spans 1230-1266 (DIDECSSLPCLNGGICRDQVGGFTCECSLGYSGQICE). The 37-residue stretch at 1268-1304 (NINECISSPCLNKGTCTDGLASYRCTCVKGYMGVHCE) folds into the EGF-like 3; calcium-binding domain. The EGF-like 4; calcium-binding domain maps to 1306–1342 (DVNECQSSPCLNNAVCKDQVGGFSCKCPPGFLGTRCE). In terms of domain architecture, EGF-like 5; calcium-binding spans 1344–1380 (NVDECLSQPCQNGATCKDGANSFRCQCPAGFTGTHCE). The 37-residue stretch at 1382-1418 (NINECQSNPCRNQATCVDELNSYSCKCQPGFSGHRCE) folds into the EGF-like 6; calcium-binding domain. Positions 1423 to 1627 (SGFNLDFEVS…VKVDSSSMFC (205 aa)) constitute a Pentraxin (PTX) domain. Sushi domains lie at 1628–1686 (SDCP…HCER) and 1687–1744 (IRCG…SCLD). 35 disulfides stabilise this stretch: cysteine 1630-cysteine 1671, cysteine 1657-cysteine 1684, cysteine 1689-cysteine 1729, cysteine 1715-cysteine 1742, cysteine 1748-cysteine 1760, cysteine 1754-cysteine 1769, cysteine 1771-cysteine 1782, cysteine 1788-cysteine 1828, cysteine 1814-cysteine 1841, cysteine 1846-cysteine 1886, cysteine 1872-cysteine 1899, cysteine 1904-cysteine 1944, cysteine 1930-cysteine 1957, cysteine 1962-cysteine 2002, cysteine 1988-cysteine 2015, cysteine 2020-cysteine 2060, cysteine 2046-cysteine 2077, cysteine 2082-cysteine 2125, cysteine 2111-cysteine 2140, cysteine 2145-cysteine 2185, cysteine 2171-cysteine 2198, cysteine 2203-cysteine 2244, cysteine 2230-cysteine 2258, cysteine 2263-cysteine 2303, cysteine 2289-cysteine 2317, cysteine 2322-cysteine 2362, cysteine 2348-cysteine 2375, cysteine 2380-cysteine 2421, cysteine 2407-cysteine 2434, cysteine 2439-cysteine 2479, cysteine 2465-cysteine 2492, cysteine 2497-cysteine 2537, cysteine 2523-cysteine 2550, cysteine 2555-cysteine 2595, and cysteine 2581-cysteine 2607. The EGF-like 7; calcium-binding domain maps to 1744 to 1783 (DVDECAVGSDCSEHASCLNTNGSYVCSCNPPYTGDGKNCA). Sushi domains are found at residues 1780 to 1843 (KNCA…SCEA), 1844 to 1901 (ISCG…VCEL), 1902 to 1959 (VKCS…SCQL), 1960 to 2017 (VSCG…QCLA), 2018 to 2079 (VSCD…RCIA), 2080 to 2142 (HFCE…QCIP), 2143 to 2200 (VRCG…TCHP), 2201 to 2260 (VSCN…SCTP), 2261 to 2319 (LNCG…KCVP), 2320 to 2377 (TKCA…ICKM), 2378 to 2436 (VLCP…ECVP), 2437 to 2494 (VECP…MCKP), 2495 to 2552 (IECP…SCDA), and 2553 to 2609 (IHCS…TCVP). Residues 2638–2645 (DMMEVPYL) form an important for the interaction with integrin ITGA9:ITGB1 region. Sushi domains lie at 2660–2711 (NTKE…SCIS), 2712–2769 (IECD…RCEA), 2770–2827 (ISCS…MCIP), 2828–2885 (VDCG…SCMP), 2886–2943 (VRCP…VCKP), 2944–3001 (ATCG…SCLP), 3002–3057 (CRCS…LCEH), 3058–3115 (AQCG…TCEP), 3116–3174 (LSCG…TCSP), 3175–3234 (KKCP…SCIP), 3235–3292 (VVCG…VCRE), 3293–3350 (NRCE…LCKP), 3351–3409 (NPCP…RCEK), and 3410–3466 (ISCG…VCRA). 33 cysteine pairs are disulfide-bonded: cysteine 2682-cysteine 2709, cysteine 2714-cysteine 2754, cysteine 2740-cysteine 2767, cysteine 2772-cysteine 2812, cysteine 2798-cysteine 2825, cysteine 2830-cysteine 2870, cysteine 2856-cysteine 2883, cysteine 2888-cysteine 2928, cysteine 2914-cysteine 2941, cysteine 2946-cysteine 2986, cysteine 2972-cysteine 2999, cysteine 3004-cysteine 3043, cysteine 3029-cysteine 3055, cysteine 3060-cysteine 3100, cysteine 3086-cysteine 3113, cysteine 3118-cysteine 3159, cysteine 3144-cysteine 3172, cysteine 3177-cysteine 3217, cysteine 3203-cysteine 3232, cysteine 3237-cysteine 3277, cysteine 3263-cysteine 3290, cysteine 3295-cysteine 3335, cysteine 3321-cysteine 3348, cysteine 3353-cysteine 3394, cysteine 3380-cysteine 3407, cysteine 3412-cysteine 3452, cysteine 3438-cysteine 3464, cysteine 3500-cysteine 3510, cysteine 3504-cysteine 3516, cysteine 3518-cysteine 3527, cysteine 3532-cysteine 3542, cysteine 3536-cysteine 3548, and cysteine 3550-cysteine 3559. 2 EGF-like domains span residues 3496 to 3528 (EEPI…SRCH) and 3529 to 3560 (TATC…HDCS).

Interacts (via Sushi domain 21) with ITGA9:ITGB1; thereby inhibits Ca(2+) intracellular signaling and as a result represses vasocontraction. Interacts (via Sushi domain 21) with ITGA4:ITGB1; thereby inhibits Ca(2+) intracellular signaling and as a result represses vasocontraction. Interacts with ANGPT1 and ANGPT2. Interacts with PEAR1 (via extracellular domain). Interacts with HSPG2, TLN1, FN1, COPA, CCT2, IQGAP1, LAMC1 and NID1. Interacts (via C-terminus) with TIE1. In terms of tissue distribution, expressed in the media layer of the arterial wall (at protein level). Highly expressed in lung and placenta, weakly expressed in the kidney, heart, brain and spleen. Also expressed in bone and periosteum, but not in cartilage and skeletal muscle.

The protein resides in the secreted. It localises to the nucleus. The protein localises to the cytoplasm. Its subcellular location is the membrane. Its function is as follows. Required for morphological development, cell alignment and migration of lymphatic endothelial cells during embryonic development, potentially via modulation of ANGPT2-TIE1 signaling and subsequent activation of FOXC2 transcription. Required for embryonic lymphatic vascular development, via mediating the correct formation of the first lymphovenous contact site and tight association of the lymphatic endothelium with the venous endothelium. Represses PRKCA-mediated L-type voltage-gated channel Ca(2+) influx and ROCK-mediated calcium sensitivity in vascular smooth muscle cells, via its interaction with integrins, thereby inhibiting vasocontraction. Promotes platelet activation, via its interaction with PEAR1 and subsequent activation of AKT/mTOR signaling. Plays a role in epidermal development and keratinocyte differentiation, independent of cell-cell adhesion. May play a role in initial cell attachment of stromal osteogenic cells. May promote myoblast cell adhesion when in the presence of integrin ITGA9:ITGB1. The protein is Sushi, von Willebrand factor type A, EGF and pentraxin domain-containing protein 1 (Svep1) of Mus musculus (Mouse).